The sequence spans 203 residues: Imidazoleglycerol-phosphate dehydratase (203 aa).

Belongs to the imidazoleglycerol-phosphate dehydratase family.

The protein resides in the cytoplasm. It carries out the reaction D-erythro-1-(imidazol-4-yl)glycerol 3-phosphate = 3-(imidazol-4-yl)-2-oxopropyl phosphate + H2O. The protein operates within amino-acid biosynthesis; L-histidine biosynthesis; L-histidine from 5-phospho-alpha-D-ribose 1-diphosphate: step 6/9. The chain is Imidazoleglycerol-phosphate dehydratase from Deinococcus geothermalis (strain DSM 11300 / CIP 105573 / AG-3a).